The following is an 821-amino-acid chain: uncharacterized protein (821 aa).

10 disordered regions span residues 1-20 (MGQT…TTSS), 55-96 (SENY…EAYS), 134-205 (SYDF…NNEH), 240-263 (RLHQ…RSSW), 274-293 (PEEF…TPLN), 360-381 (NVLQ…ESNS), 430-450 (TSED…NESR), 467-497 (EFST…SQAF), 512-535 (RNLF…NQPT), and 549-641 (AQEP…SNQT). Polar residues-rich tracts occupy residues 58–88 (YADT…CSTQ) and 185–203 (SLPS…SINN). Residues 279 to 293 (NASNPEAHSNFTPLN) show a composition bias toward polar residues. The segment covering 437–450 (TMTQENQSLHNESR) has biased composition (polar residues). Low complexity-rich tracts occupy residues 517–529 (TSNS…SSFS) and 568–578 (SSLLDSSNSNS). Over residues 579-622 (QRPFSTVPSESNVFSRNASGNFSMSQTHQPTTDNTSSFSTQPGR) the composition is skewed to polar residues. The segment at 766–809 (CLICLETYTNGDICRKLQACKHFFHQACIDQWLTTGNNSCPLCR) adopts an RING-type; atypical zinc-finger fold.

This is an uncharacterized protein from Schizosaccharomyces pombe (strain 972 / ATCC 24843) (Fission yeast).